The following is a 289-amino-acid chain: Heme oxygenase 1, chloroplastic (289 aa).

Residues 1–64 constitute a chloroplast transit peptide; sequence MAPAAASLTA…SASSSRRMVV (64 aa). Histidine 96 lines the heme b pocket.

The protein belongs to the heme oxygenase family.

It is found in the plastid. It localises to the chloroplast. It catalyses the reaction heme b + 3 reduced [NADPH--hemoprotein reductase] + 3 O2 = biliverdin IXalpha + CO + Fe(2+) + 3 oxidized [NADPH--hemoprotein reductase] + 3 H2O + H(+). Catalyzes the opening of the heme ring to form the open-chain tetrapyrrole biliverdin IX with the release of iron and carbon monoxide (CO). Is a key enzyme in the synthesis of the chromophore of the phytochrome family of plant photoreceptors. Essential for photoperiod response and repression of flowering through cytochromes that inhibit flowering by affecting both HD1 and EHD1 flowering pathways. The polypeptide is Heme oxygenase 1, chloroplastic (HO1) (Oryza sativa subsp. japonica (Rice)).